A 206-amino-acid chain; its full sequence is Sclerostin domain-containing protein 1 (206 aa).

A signal peptide spans 1–23; that stretch reads MLPPAIHLSLIPLLCILMRNCLA. Positions 42–62 are disordered; it reads AHPSSNSTLNQARNGGRHFSS. Residues 44 to 62 show a composition bias toward polar residues; the sequence is PSSNSTLNQARNGGRHFSS. Asn47 is a glycosylation site (N-linked (GlcNAc...) asparagine). Disulfide bonds link Cys75/Cys133, Cys89/Cys147, Cys100/Cys163, and Cys104/Cys165. The region spanning 75–170 is the CTCK domain; sequence CRELRSTKYI…TACKCKRYTR (96 aa). Asn173 carries N-linked (GlcNAc...) asparagine glycosylation. Residues 176–206 form a disordered region; that stretch reads SHNFESVSPAKPAQHHRERKRASKSSKHSLS. The segment covering 188–206 has biased composition (basic residues); it reads AQHHRERKRASKSSKHSLS.

Belongs to the sclerostin family. As to quaternary structure, interacts with BMP2, BMP4, BMP6 and BMP7 with high affinity. As to expression, highly expressed in kidney at renal collecting ducts level and weakly in brain.

The protein localises to the secreted. In terms of biological role, may be involved in the onset of endometrial receptivity for implantation/sensitization for the decidual cell reaction. Enhances Wnt signaling and inhibits TGF-beta signaling. Directly antagonizes activity of BMP2, BMP4, BMP6 and BMP7 in a dose-dependent manner. The sequence is that of Sclerostin domain-containing protein 1 (Sostdc1) from Mus musculus (Mouse).